A 305-amino-acid polypeptide reads, in one-letter code: tRNA uridine(34) hydroxylase (305 aa).

The region spanning 125-219 (ADENTVVVDT…YLEEVPREQS (95 aa)) is the Rhodanese domain. Catalysis depends on C179, which acts as the Cysteine persulfide intermediate.

Belongs to the TrhO family.

It catalyses the reaction uridine(34) in tRNA + AH2 + O2 = 5-hydroxyuridine(34) in tRNA + A + H2O. Its function is as follows. Catalyzes oxygen-dependent 5-hydroxyuridine (ho5U) modification at position 34 in tRNAs. The sequence is that of tRNA uridine(34) hydroxylase from Brucella canis (strain ATCC 23365 / NCTC 10854 / RM-666).